Here is a 1032-residue protein sequence, read N- to C-terminus: GPI ethanolamine phosphate transferase 1 (1032 aa).

Residues 1–6 (MARLGR) lie on the Cytoplasmic side of the membrane. The helical transmembrane segment at 7–27 (FGFLALAVVFHLIYAYSIFDI) threads the bilayer. Topologically, residues 28 to 468 (YFVSPIVSGM…LQTYDWLFLR (441 aa)) are lumenal. Residues asparagine 150 and asparagine 435 are each glycosylated (N-linked (GlcNAc...) asparagine). Residues 469-489 (TIITFGYLGWIAYALTTVIDL) form a helical membrane-spanning segment. The Cytoplasmic portion of the chain corresponds to 490–500 (HVLHRTSDSKR). Residues 501–521 (TVGSTIFFTSILAALFSVLLY) traverse the membrane as a helical segment. Topologically, residues 522–523 (QK) are lumenal. A helical transmembrane segment spans residues 524-544 (SSWQYYVYGAFPIFFWEEVFA). Residues 545–564 (RRKALIAGREILLGHVRSFG) lie on the Cytoplasmic side of the membrane. Residues 565–585 (GYIASGFQLVAFVAVLEALLM) traverse the membrane as a helical segment. At 586 to 596 (RHQVQSYFHRE) the chain is on the lumenal side. A helical transmembrane segment spans residues 597 to 617 (IYTVCFVLGSFWPILYGVDFV). Residues 618-622 (RQNTV) lie on the Cytoplasmic side of the membrane. Residues 623 to 643 (LSATWAVGCSLMSTFTLLPVI) traverse the membrane as a helical segment. The Lumenal portion of the chain corresponds to 644–647 (KVEN). The helical transmembrane segment at 648–668 (INTITYGALLMFFTGLFYLLF) threads the bilayer. The Cytoplasmic segment spans residues 669-688 (EDTILKHSKSSGHAPGAISS). A helical transmembrane segment spans residues 689–709 (LGSRVIMGMQVGMVLLALIVT). Topologically, residues 710-722 (RSSVSSLQAKQGL) are lumenal. The helical transmembrane segment at 723 to 743 (PFGNQVVGWFVLVASLVLPFF) threads the bilayer. Residues 744 to 766 (HRLYPNSHYLHRLMVLFLTFSPT) lie on the Cytoplasmic side of the membrane. Residues 767–787 (FIILTISYEGLFYFVFCMTLV) form a helical membrane-spanning segment. The Lumenal portion of the chain corresponds to 788–841 (TWVRLEHAIYVYTARSSAHYGGNNTVPKKPGLNATAVIDGQEYRYRRLGLADTR). Asparagine 810 and asparagine 820 each carry an N-linked (GlcNAc...) asparagine glycan. Residues 842–862 (VALFFFFLLQSAFFSTGNIAS) form a helical membrane-spanning segment. The Cytoplasmic segment spans residues 863–884 (VSSFSLESVFRLIPVFSPFSQS). The chain crosses the membrane as a helical span at residues 885-905 (ALLILKLLIPFAIISANLGIL). Topologically, residues 906–914 (NRRLEVAPS) are lumenal. The chain crosses the membrane as a helical span at residues 915-935 (ALFMVVMSISDVMTLNFFYMV). Residues 936-951 (RDEGSWLDIGTTISHF) lie on the Cytoplasmic side of the membrane. Residues 952-972 (LIASFLCTFVAGLEFLSEVFI) traverse the membrane as a helical segment. Residues 973 to 1032 (SGVDFGPTTKAIGASITKTVGGTAGSDVVDSQSGPEDAANSKKAEGLEGSETIRQNGGSV) lie on the Lumenal side of the membrane. A disordered region spans residues 994–1032 (GTAGSDVVDSQSGPEDAANSKKAEGLEGSETIRQNGGSV).

Belongs to the PIGG/PIGN/PIGO family. PIGN subfamily.

The protein localises to the endoplasmic reticulum membrane. Its pathway is glycolipid biosynthesis; glycosylphosphatidylinositol-anchor biosynthesis. Ethanolamine phosphate transferase involved in glycosylphosphatidylinositol-anchor biosynthesis. Transfers ethanolamine phosphate to the first alpha-1,4-linked mannose of the glycosylphosphatidylinositol precursor of GPI-anchor. The chain is GPI ethanolamine phosphate transferase 1 (mcd4) from Aspergillus fumigatus (strain ATCC MYA-4609 / CBS 101355 / FGSC A1100 / Af293) (Neosartorya fumigata).